Reading from the N-terminus, the 91-residue chain is Cell division topological specificity factor (91 aa).

This sequence belongs to the MinE family.

In terms of biological role, prevents the cell division inhibition by proteins MinC and MinD at internal division sites while permitting inhibition at polar sites. This ensures cell division at the proper site by restricting the formation of a division septum at the midpoint of the long axis of the cell. The protein is Cell division topological specificity factor of Lachnospira eligens (strain ATCC 27750 / DSM 3376 / VPI C15-48 / C15-B4) (Eubacterium eligens).